We begin with the raw amino-acid sequence, 418 residues long: L-rhamnose isomerase (418 aa).

The Mn(2+) site is built by His261, Asp293, and Asp295.

It belongs to the rhamnose isomerase family. The cofactor is Mn(2+).

The protein resides in the cytoplasm. It carries out the reaction L-rhamnopyranose = L-rhamnulose. It participates in carbohydrate degradation; L-rhamnose degradation; glycerone phosphate from L-rhamnose: step 1/3. In terms of biological role, catalyzes the interconversion of L-rhamnose and L-rhamnulose. The polypeptide is L-rhamnose isomerase (Clostridium beijerinckii (strain ATCC 51743 / NCIMB 8052) (Clostridium acetobutylicum)).